We begin with the raw amino-acid sequence, 682 residues long: Acyl-CoA synthetase short-chain family member 3, mitochondrial (682 aa).

A mitochondrion-targeting transit peptide spans 1-29 (MKPSWLQCRKVTGAGTLGAPLPGSPSVRG). 222-225 (EPGR) is a binding site for CoA. ATP is bound by residues 420-422 (GER) and 441-446 (DHWWQT). Position 513 is an N6-succinyllysine (lysine 513). At lysine 519 the chain carries N6-acetyllysine. Aspartate 534, arginine 549, and arginine 560 together coordinate ATP. Arginine 619 serves as a coordination point for CoA.

Belongs to the ATP-dependent AMP-binding enzyme family.

It is found in the mitochondrion matrix. It carries out the reaction acetate + ATP + CoA = acetyl-CoA + AMP + diphosphate. The catalysed reaction is propanoate + ATP + CoA = propanoyl-CoA + AMP + diphosphate. The enzyme catalyses butanoate + ATP + CoA = butanoyl-CoA + AMP + diphosphate. Functionally, catalyzes the synthesis of acetyl-CoA from short-chain fatty acids. Propionate is the preferred substrate but can also utilize acetate and butyrate with a much lower affinity. This Mus musculus (Mouse) protein is Acyl-CoA synthetase short-chain family member 3, mitochondrial (Acss3).